Here is a 46-residue protein sequence, read N- to C-terminus: Major urinary protein (46 aa).

The N-linked (GlcNAc...) asparagine glycan is linked to asparagine 15.

The protein belongs to the calycin superfamily. Lipocalin family. Found in many tissues including liver, urine, preputial gland, clitoral gland, submandibular gland and salivary gland.

The protein localises to the secreted. Its function is as follows. Binds pheromones that are released from drying urine of males. These pheromones affect the sexual behavior of females. Acts as a shuttle for pheromonal communication between individuals of the same species. This Rattus rattus (Black rat) protein is Major urinary protein.